The primary structure comprises 578 residues: Phosphoenolpyruvate-protein phosphotransferase (578 aa).

The active-site Tele-phosphohistidine intermediate is the His-195. Residues Arg-302 and Arg-338 each coordinate phosphoenolpyruvate. Residues Glu-437 and Asp-461 each contribute to the Mg(2+) site. Phosphoenolpyruvate contacts are provided by residues Asn-460–Asp-461 and Arg-471. The active-site Proton donor is Cys-508.

The protein belongs to the PEP-utilizing enzyme family. Homodimer. The cofactor is Mg(2+).

Its subcellular location is the cytoplasm. It carries out the reaction L-histidyl-[protein] + phosphoenolpyruvate = N(pros)-phospho-L-histidyl-[protein] + pyruvate. Its function is as follows. General (non sugar-specific) component of the phosphoenolpyruvate-dependent sugar phosphotransferase system (sugar PTS). This major carbohydrate active-transport system catalyzes the phosphorylation of incoming sugar substrates concomitantly with their translocation across the cell membrane. Enzyme I transfers the phosphoryl group from phosphoenolpyruvate (PEP) to the phosphoryl carrier protein (HPr). This is Phosphoenolpyruvate-protein phosphotransferase (ptsI) from Geobacillus stearothermophilus (Bacillus stearothermophilus).